We begin with the raw amino-acid sequence, 193 residues long: dTTP/UTP pyrophosphatase (193 aa).

Asp71 serves as the catalytic Proton acceptor.

Belongs to the Maf family. YhdE subfamily. Requires a divalent metal cation as cofactor.

It is found in the cytoplasm. It catalyses the reaction dTTP + H2O = dTMP + diphosphate + H(+). The enzyme catalyses UTP + H2O = UMP + diphosphate + H(+). In terms of biological role, nucleoside triphosphate pyrophosphatase that hydrolyzes dTTP and UTP. May have a dual role in cell division arrest and in preventing the incorporation of modified nucleotides into cellular nucleic acids. The protein is dTTP/UTP pyrophosphatase of Dictyoglomus turgidum (strain DSM 6724 / Z-1310).